We begin with the raw amino-acid sequence, 404 residues long: Caspase-1 (404 aa).

The region spanning 1-91 (MADKVLKEKR…HLAGVLELST (91 aa)) is the CARD domain. Positions 1–119 (MADKVLKEKR…PFPAPQTVQD (119 aa)) are excised as a propeptide. The disordered stretch occupies residues 111-132 (FPAPQTVQDNPVKPASSEPRGS). Catalysis depends on residues His-237 and Cys-285. A propeptide spanning residues 298–316 (SVGPSGNSSLLAAEDFEYD) is cleaved from the precursor. Residue Ser-302 is modified to Phosphoserine.

The protein belongs to the peptidase C14A family. As to quaternary structure, heterotetramer that consists of two anti-parallel arranged heterodimers, each one formed by a 20 kDa (Caspase-1 subunit p20) and a 10 kDa (Caspase-1 subunit p10) subunit. May be a component of the inflammasome, a protein complex which also includes PYCARD, CARD8 and NLRP2 and whose function would be the activation of pro-inflammatory caspases. Component of the AIM2 PANoptosome complex, a multiprotein complex that drives inflammatory cell death (PANoptosis). Both the p10 and p20 subunits interact with MEFV. Interacts with CARD17P/INCA and CARD18. Interacts with SERPINB1; this interaction regulates CASP1 activity. Heterotetramer that consists of two anti-parallel arranged heterodimers, each one formed by a 20 kDa (Caspase-1 subunit p20) and a 10 kDa (Caspase-1 subunit p10) subunit. In terms of processing, the two subunits are derived from the precursor sequence by an autocatalytic mechanism. Post-translationally, ubiquitinated via 'Lys-11'-linked polyubiquitination. Deubiquitinated by USP8.

The protein localises to the cytoplasm. It localises to the cell membrane. It catalyses the reaction Strict requirement for an Asp residue at position P1 and has a preferred cleavage sequence of Tyr-Val-Ala-Asp-|-.. In terms of biological role, thiol protease involved in a variety of inflammatory processes by proteolytically cleaving other proteins, such as the precursors of the inflammatory cytokines interleukin-1 beta (IL1B) and interleukin 18 (IL18) as well as the pyroptosis inducer Gasdermin-D (GSDMD), into active mature peptides. Plays a key role in cell immunity as an inflammatory response initiator: once activated through formation of an inflammasome complex, it initiates a pro-inflammatory response through the cleavage of the two inflammatory cytokines IL1B and IL18, releasing the mature cytokines which are involved in a variety of inflammatory processes. Cleaves a tetrapeptide after an Asp residue at position P1. Also initiates pyroptosis, a programmed lytic cell death pathway, through cleavage of GSDMD. In contrast to cleavage of interleukin IL1B, recognition and cleavage of GSDMD is not strictly dependent on the consensus cleavage site but depends on an exosite interface on CASP1 that recognizes and binds the Gasdermin-D, C-terminal (GSDMD-CT) part. Cleaves and activates CASP7 in response to bacterial infection, promoting plasma membrane repair. Upon inflammasome activation, during DNA virus infection but not RNA virus challenge, controls antiviral immunity through the cleavage of CGAS, rendering it inactive. In apoptotic cells, cleaves SPHK2 which is released from cells and remains enzymatically active extracellularly. This is Caspase-1 (CASP1) from Sus scrofa (Pig).